We begin with the raw amino-acid sequence, 165 residues long: uncharacterized protein (165 aa).

Residues 1 to 38 (MFTVKEKNRQELEEELNDLEFQIYRMQENMKDLSKDAK) adopt a coiled-coil conformation.

This is an uncharacterized protein from Bacillus subtilis (strain 168).